The chain runs to 89 residues: Small ribosomal subunit protein uS15 (89 aa).

The protein belongs to the universal ribosomal protein uS15 family. As to quaternary structure, part of the 30S ribosomal subunit. Forms a bridge to the 50S subunit in the 70S ribosome, contacting the 23S rRNA.

One of the primary rRNA binding proteins, it binds directly to 16S rRNA where it helps nucleate assembly of the platform of the 30S subunit by binding and bridging several RNA helices of the 16S rRNA. Its function is as follows. Forms an intersubunit bridge (bridge B4) with the 23S rRNA of the 50S subunit in the ribosome. The polypeptide is Small ribosomal subunit protein uS15 (Shewanella frigidimarina (strain NCIMB 400)).